A 502-amino-acid chain; its full sequence is MGLRALMLWLLAAAGLVRESLQGEFQRKLYKELLKNYNPLERPVANDSQPLTVYFTLSLMQIMDVDEKNQVLTTNIWLQMYWTDHYLQWNVSEYPGVKNVRFPDGLIWKPDILLYNSADERFDATFHTNVLVNSSGHCQYLPPGIFKSSCYIDVRWFPFDVQKCNLKFGSWTYGGWSLDLQMQEADISGYISNGEWDLVGIPGKRTESFYECCKEPYPDITFTVTMRRRTLYYGLNLLIPCVLISALALLVFLLPADSGEKISLGITVLLSLTVFMLLVAEIMPATSDSVPLIAQYFASTMIIVGLSVVVTVIVLQYHHHDPDGGKMPKWTRVILLNWCAWFLRMKRPGEDKVRPACQHKQRRCSLSSMEMNTVSGQQCSNGNMLYIGFRGLDGVHCTPTTDSGVICGRMTCSPTEEENLLHSGHPSEGDPDLAKILEEVRYIANRFRDQDEEEAICNEWKFAASVVDRLCLMAFSVFTIICTIGILMSAPNFVEAVSKDFA.

The first 23 residues, 1-23, serve as a signal peptide directing secretion; the sequence is MGLRALMLWLLAAAGLVRESLQG. Residues 24–233 are Extracellular-facing; that stretch reads EFQRKLYKEL…VTMRRRTLYY (210 aa). R42 and V44 together coordinate Ca(2+). 3 N-linked (GlcNAc...) asparagine glycosylation sites follow: N46, N90, and N133. Cysteines 150 and 164 form a disulfide. Residues T172 and Y210 each contribute to the Ca(2+) site. Cysteines 212 and 213 form a disulfide. 3 helical membrane-spanning segments follow: residues 234–254, 262–282, and 295–315; these read GLNLLIPCVLISALALLVFLL, ISLGITVLLSLTVFMLLVAEI, and QYFASTMIIVGLSVVVTVIVL. The Cytoplasmic portion of the chain corresponds to 316–469; it reads QYHHHDPDGG…WKFAASVVDR (154 aa). Residues 470 to 490 traverse the membrane as a helical segment; that stretch reads LCLMAFSVFTIICTIGILMSA.

This sequence belongs to the ligand-gated ion channel (TC 1.A.9) family. Acetylcholine receptor (TC 1.A.9.1) subfamily. Alpha-7/CHRNA7 sub-subfamily. As to quaternary structure, homopentamer. Can also form heteropentamers with CHRNB2, mainly found in basal forebrain cholinergic neurons.

The protein resides in the postsynaptic cell membrane. Its subcellular location is the cell membrane. The enzyme catalyses Ca(2+)(in) = Ca(2+)(out). It carries out the reaction K(+)(in) = K(+)(out). The catalysed reaction is Na(+)(in) = Na(+)(out). It catalyses the reaction choline(out) = choline(in). The enzyme catalyses NH4(+)(in) = NH4(+)(out). It carries out the reaction L-arginine(in) = L-arginine(out). The catalysed reaction is guanidine(out) = guanidine(in). Activated by a myriad of ligands such as acetylcholine, cytisine, nicotine, choline and epibatidine. Activity is modulated by positive allosteric modulators (PAMs), such as flavonoids, with a wide range of chemical diversity, pharmacological sensitivity and efficacy. AChR activity is inhibited by the antagonists alpha-conotoxons RgIA, ImI and ImII, small disulfide-constrained peptides from cone snails. Functionally, component of neuronal acetylcholine receptors (nAChRs) that function as pentameric, ligand-gated cation channels with high calcium permeability among other activities. nAChRs are excitatory neurotrasnmitter receptors formed by a collection of nAChR subunits known to mediate synaptic transmission in the nervous system and the neuromuscular junction. Each nAchR subunit confers differential attributes to channel properties, including activation, deactivation and desensitization kinetics, pH sensitivity, cation permeability, and binding to allosteric modulators. CHRNA7 is an homooligomeric neuronal acetylcholine receptor abundantly expressed in the central nervous system. Characterized by a fast desensitization and high calcium permeability. Also expressed in non-neuronal cells such as immune cells like lymphocytes, monocytes and macrophages. The protein is Neuronal acetylcholine receptor subunit alpha-7 (CHRNA7) of Gallus gallus (Chicken).